We begin with the raw amino-acid sequence, 239 residues long: MIEIIPAIDIIDGKCVRLSQGDYDSKKVYNENPVEVAKEFEANGVRRLHVVDLDGAASHHVVNHRVLEQIATRTSLIVDFGGGVKSDEDLKIAFESGAQMVTGGSVAVKDPELFCHWLEVYGSEKIILGADVKEHKIAVNGWKDESACELFPFLEDYINKGIQKVICTDISCDGMLKGPSIDLYKEMLEKFPNLYLMASGGVSNVDDIIALNEAGVPGVIFGKALYEGHITLKDLRIFL.

Asp-9 acts as the Proton acceptor in catalysis. The active-site Proton donor is Asp-131.

It belongs to the HisA/HisF family.

It localises to the cytoplasm. The enzyme catalyses 1-(5-phospho-beta-D-ribosyl)-5-[(5-phospho-beta-D-ribosylamino)methylideneamino]imidazole-4-carboxamide = 5-[(5-phospho-1-deoxy-D-ribulos-1-ylimino)methylamino]-1-(5-phospho-beta-D-ribosyl)imidazole-4-carboxamide. It functions in the pathway amino-acid biosynthesis; L-histidine biosynthesis; L-histidine from 5-phospho-alpha-D-ribose 1-diphosphate: step 4/9. This Bacteroides thetaiotaomicron (strain ATCC 29148 / DSM 2079 / JCM 5827 / CCUG 10774 / NCTC 10582 / VPI-5482 / E50) protein is 1-(5-phosphoribosyl)-5-[(5-phosphoribosylamino)methylideneamino] imidazole-4-carboxamide isomerase.